Here is a 346-residue protein sequence, read N- to C-terminus: Biotin synthase (346 aa).

The Radical SAM core domain occupies 38-256; sequence RQVQVSTLLS…IAIARIMMPT (219 aa). Cys53, Cys57, and Cys60 together coordinate [4Fe-4S] cluster. [2Fe-2S] cluster-binding residues include Cys97, Cys128, Cys188, and Arg260.

Belongs to the radical SAM superfamily. Biotin synthase family. As to quaternary structure, homodimer. Requires [4Fe-4S] cluster as cofactor. [2Fe-2S] cluster is required as a cofactor.

It carries out the reaction (4R,5S)-dethiobiotin + (sulfur carrier)-SH + 2 reduced [2Fe-2S]-[ferredoxin] + 2 S-adenosyl-L-methionine = (sulfur carrier)-H + biotin + 2 5'-deoxyadenosine + 2 L-methionine + 2 oxidized [2Fe-2S]-[ferredoxin]. It participates in cofactor biosynthesis; biotin biosynthesis; biotin from 7,8-diaminononanoate: step 2/2. Catalyzes the conversion of dethiobiotin (DTB) to biotin by the insertion of a sulfur atom into dethiobiotin via a radical-based mechanism. The polypeptide is Biotin synthase (Klebsiella pneumoniae (strain 342)).